Consider the following 117-residue polypeptide: NADH-ubiquinone oxidoreductase chain 3 (117 aa).

The next 3 membrane-spanning stretches (helical) occupy residues 1–21 (MLMLSIMATIIFIITIVVMML), 57–77 (FFLIAIIFLIFDVEIALLLPM), and 86–106 (LMNWTMTSFFFIFILLIGLYH).

The protein belongs to the complex I subunit 3 family.

Its subcellular location is the mitochondrion membrane. The enzyme catalyses a ubiquinone + NADH + 5 H(+)(in) = a ubiquinol + NAD(+) + 4 H(+)(out). Its function is as follows. Core subunit of the mitochondrial membrane respiratory chain NADH dehydrogenase (Complex I) that is believed to belong to the minimal assembly required for catalysis. Complex I functions in the transfer of electrons from NADH to the respiratory chain. The immediate electron acceptor for the enzyme is believed to be ubiquinone. In Anopheles quadrimaculatus (Common malaria mosquito), this protein is NADH-ubiquinone oxidoreductase chain 3 (ND3).